The following is a 199-amino-acid chain: Putative peroxiredoxin ycf42 (199 aa).

Positions 8 to 165 (LQVGQIAPDF…TLRVLQAIQY (158 aa)) constitute a Thioredoxin domain. Residue Cys53 is the Cysteine sulfenic acid (-SOH) intermediate of the active site.

It belongs to the peroxiredoxin family. AhpC/Prx1 subfamily. Homodimer; disulfide-linked, upon oxidation. In terms of processing, the Cys-53-SH group is the primary site of oxidation by H(2)O(2), and the oxidized Cys-53 (probably Cys-SOH) rapidly reacts with Cys-174-SH of the other subunit to form an intermolecular disulfide. This disulfide is subsequently reduced by thioredoxin.

It localises to the plastid. It is found in the chloroplast. The catalysed reaction is a hydroperoxide + [thioredoxin]-dithiol = an alcohol + [thioredoxin]-disulfide + H2O. Functionally, thiol-specific peroxidase that catalyzes the reduction of hydrogen peroxide and organic hydroperoxides to water and alcohols, respectively. Plays a role in cell protection against oxidative stress by detoxifying peroxides. In Porphyra purpurea (Red seaweed), this protein is Putative peroxiredoxin ycf42 (ycf42).